A 272-amino-acid chain; its full sequence is Proteasome subunit beta type-5 (272 aa).

Positions 1-55 are cleaved as a propeptide — removed in mature form; sequence MKLDTSGLESTAPIFRRSDFVFDGLQMTPSFDLPNPTDFDGFQKEAVQMVKPAKG. Catalysis depends on Thr-56, which acts as the Nucleophile.

The protein belongs to the peptidase T1B family. As to quaternary structure, the 26S proteasome consists of a 20S proteasome core and two 19S regulatory subunits. The 20S proteasome core is composed of 28 subunits that are arranged in four stacked rings, resulting in a barrel-shaped structure. The two end rings are each formed by seven alpha subunits, and the two central rings are each formed by seven beta subunits. The catalytic chamber with the active sites is on the inside of the barrel.

The protein localises to the cytoplasm. The protein resides in the nucleus. The enzyme catalyses Cleavage of peptide bonds with very broad specificity.. Its function is as follows. The proteasome is a multicatalytic proteinase complex which is characterized by its ability to cleave peptides with Arg, Phe, Tyr, Leu, and Glu adjacent to the leaving group at neutral or slightly basic pH. The proteasome has an ATP-dependent proteolytic activity. This is Proteasome subunit beta type-5 from Spinacia oleracea (Spinach).